Reading from the N-terminus, the 176-residue chain is NAD(P)H-quinone oxidoreductase subunit 6, chloroplastic (176 aa).

5 helical membrane-spanning segments follow: residues 10 to 30 (ILLV…VLLT), 32 to 52 (PISS…FYIP), 61 to 81 (AQLL…VMFM), 92 to 112 (LWTI…FSLI), and 152 to 172 (FYLP…GAIA).

This sequence belongs to the complex I subunit 6 family. In terms of assembly, NDH is composed of at least 16 different subunits, 5 of which are encoded in the nucleus.

The protein localises to the plastid. It is found in the chloroplast thylakoid membrane. The catalysed reaction is a plastoquinone + NADH + (n+1) H(+)(in) = a plastoquinol + NAD(+) + n H(+)(out). The enzyme catalyses a plastoquinone + NADPH + (n+1) H(+)(in) = a plastoquinol + NADP(+) + n H(+)(out). In terms of biological role, NDH shuttles electrons from NAD(P)H:plastoquinone, via FMN and iron-sulfur (Fe-S) centers, to quinones in the photosynthetic chain and possibly in a chloroplast respiratory chain. The immediate electron acceptor for the enzyme in this species is believed to be plastoquinone. Couples the redox reaction to proton translocation, and thus conserves the redox energy in a proton gradient. The chain is NAD(P)H-quinone oxidoreductase subunit 6, chloroplastic (ndhG) from Chloranthus spicatus (Chulantree).